A 256-amino-acid polypeptide reads, in one-letter code: 1-(5-phosphoribosyl)-5-[(5-phosphoribosylamino)methylideneamino] imidazole-4-carboxamide isomerase (256 aa).

The active-site Proton acceptor is the Asp-8. Asp-129 acts as the Proton donor in catalysis.

This sequence belongs to the HisA/HisF family.

The protein resides in the cytoplasm. The catalysed reaction is 1-(5-phospho-beta-D-ribosyl)-5-[(5-phospho-beta-D-ribosylamino)methylideneamino]imidazole-4-carboxamide = 5-[(5-phospho-1-deoxy-D-ribulos-1-ylimino)methylamino]-1-(5-phospho-beta-D-ribosyl)imidazole-4-carboxamide. It participates in amino-acid biosynthesis; L-histidine biosynthesis; L-histidine from 5-phospho-alpha-D-ribose 1-diphosphate: step 4/9. The chain is 1-(5-phosphoribosyl)-5-[(5-phosphoribosylamino)methylideneamino] imidazole-4-carboxamide isomerase from Prochlorococcus marinus (strain NATL1A).